The chain runs to 1337 residues: Protein cordon-bleu (1337 aa).

The interval 1–41 (MDAPRALAAKPPTGRKMKARAPPPPGKPAAQNVHSEQKLPH) is disordered. Serine 47, serine 50, serine 212, serine 235, serine 272, and serine 294 each carry phosphoserine. 2 disordered regions span residues 260-556 (SKAE…NDDE) and 647-768 (IASQ…HHGQ). The segment covering 288–317 (CVTTPNSPSLHSRSLTLGPSLSLGNISGVS) has biased composition (polar residues). The short motif at 323 to 328 (KKRRAP) is the KKRRAP 1 element. Phosphoserine occurs at positions 346 and 349. The short motif at 356–361 (KKRRAP) is the KKRRAP 2 element. Over residues 361–374 (PAPPPPQQPPPSPV) the composition is skewed to pro residues. Phosphoserine is present on serine 372. The segment covering 377–387 (NRKEDKEENRK) has biased composition (basic and acidic residues). Positions 411–423 (LVLPPPPPYPPPD) are enriched in pro residues. Acidic residues predominate over residues 469–480 (ESEETASEDTTE). Polar residues predominate over residues 484–500 (VMSSPSDAISLDSQQDS). Phosphothreonine is present on threonine 522. Residues 526–541 (GPQKSPSWGKSGSGSS) show a composition bias toward low complexity. 2 stretches are compositionally biased toward polar residues: residues 647-666 (IASQ…QPFV) and 687-710 (QPTL…TSLV). Serine 649 carries the phosphoserine modification. Residues 714–736 (LIDDPKAKDKGKVHGSSHSEKTQ) show a composition bias toward basic and acidic residues. Serine 816 carries the post-translational modification Phosphoserine. Disordered regions lie at residues 892 to 923 (TPQQ…SVKV) and 967 to 991 (KATT…DDAA). A Phosphoserine modification is found at serine 1038. Polar residues predominate over residues 1070–1090 (GFNEKQTTSNQKANSTSNFSQ). 4 disordered regions span residues 1070–1094 (GFNE…ALDK), 1113–1133 (MNGS…KEST), 1145–1168 (KPSS…FGPK), and 1192–1221 (AIHS…SYVE). Serine 1128 bears the Phosphoserine mark. WH2 domains follow at residues 1185–1205 (LHSA…LRKT) and 1225–1245 (ERSA…LRKV). The span at 1197–1214 (GGREKLRKTAEQTSEGRP) shows a compositional bias: basic and acidic residues. A disordered region spans residues 1262 to 1310 (GAPGLDKPQQEDLGLPPPPALPPPPAPAPQAPSASVTVSRFSTGTPSNS). Residues 1276–1291 (LPPPPALPPPPAPAPQ) show a composition bias toward pro residues. The segment covering 1297-1310 (VTVSRFSTGTPSNS) has biased composition (polar residues). Serine 1303 is modified (phosphoserine). In terms of domain architecture, WH2 3 spans 1313–1333 (ARQALMDAIRSGTGAARLRKV).

As to quaternary structure, identified in a complex composed of COBL, PACSIN1 and WASL. Interacts with PACSIN1, PACSIN2 and PACSIN3. Identified in a complex composed of ACTA1, COBL, GSN and TMSB4X. Interacts (via WH2 domains) with actin monomers. Interacts with DBNL. In terms of tissue distribution, detected in brain cortex and in the Purkinje cell layer in the cerebellum. Detected in hippocampus neurons, and at lower levels in testis, lung and spleen (at protein level). Detected in embryonic neural tube.

It localises to the cell membrane. It is found in the cytoplasm. The protein localises to the cytoskeleton. Its subcellular location is the cell projection. The protein resides in the ruffle. Plays an important role in the reorganization of the actin cytoskeleton. Binds to and sequesters actin monomers (G actin). Nucleates actin polymerization by assembling three actin monomers in cross-filament orientation and thereby promotes growth of actin filaments at the barbed end. Can also mediate actin depolymerization at barbed ends and severing of actin filaments. Promotes formation of cell ruffles. Regulates neuron morphogenesis and increases branching of axons and dendrites. Regulates dendrite branching in Purkinje cells. This Mus musculus (Mouse) protein is Protein cordon-bleu (Cobl).